The following is a 712-amino-acid chain: Golgin candidate 3 (712 aa).

Residues 23-49 (DEEEDDLHKYGSANGVSNSDRRNSSGF) are disordered. The span at 36–49 (NGVSNSDRRNSSGF) shows a compositional bias: polar residues. The stretch at 65 to 134 (AHHEIERYKA…LKEARTDISR (70 aa)) forms a coiled coil. Residues 135 to 150 (GSNNYAIKGNNDQSPN) are compositionally biased toward polar residues. Disordered regions lie at residues 135–176 (GSNN…TDSF) and 306–347 (ESRK…MEQS). Coiled coils occupy residues 197–313 (QATE…LTNS), 340–558 (GKEE…LNRM), and 659–690 (LKDAEERERREAEEAAASKAKQDSERTRQEAA). A compositionally biased stretch (basic and acidic residues) spans 328-344 (STLDKEKPESFPGKEEM). One can recognise a GRIP domain in the interval 557–608 (RMSMESDYLVDRRIVIKLLVTYFQKNHNKEVLDLMVRMLGFSEEDKERIGAA). Residues 666 to 712 (ERREAEEAAASKAKQDSERTRQEAALHDSEFSTVPLRSSESNQRLSR) are disordered. Residues 678 to 695 (AKQDSERTRQEAALHDSE) are compositionally biased toward basic and acidic residues. A compositionally biased stretch (polar residues) spans 696–712 (FSTVPLRSSESNQRLSR).

In terms of assembly, interacts with ARF1; preferentially with the active form of the protein.

It localises to the golgi apparatus. Its subcellular location is the endosome. Golgi matrix protein playing a role in tethering of vesicles to Golgi membranes and in maintaining the overall structure of the Golgi apparatus. In Arabidopsis thaliana (Mouse-ear cress), this protein is Golgin candidate 3 (GC3).